The chain runs to 516 residues: Cytochrome P450 monooxygenase dtxS2 (516 aa).

A helical membrane pass occupies residues 23–43 (ILASVIVLLGLKVATILYTAF). A glycan (N-linked (GlcNAc...) asparagine) is linked at Asn187. The chain crosses the membrane as a helical span at residues 229–249 (VLVPLLVFPYISWLLVWWLLS). A heme-binding site is contributed by Cys458.

It belongs to the cytochrome P450 family. Heme serves as cofactor.

Its subcellular location is the membrane. It functions in the pathway secondary metabolite biosynthesis. Cytochrome P450 monooxygenase; part of the gene cluster that mediates the biosynthesis of destruxins, insecticidal cyclic hexadepsipeptides which induce flaccid paralysis and visceral muscle contraction in insects through targeting the calcium channels and vacuolar-type ATPases. The aldo-keto reductase dtxS3 converts alpha-ketoisocaproic acid from deaminated leucine into alpha-hydroxyisocaproic acid (HIC), which is the first substrate for destruxin assembly by dtxS1. L-aspartate decarboxylase dtxS4 converts aspartic acid into beta-alanine, the last substrate for the destruxin assembly line performed by dtxS1. The nonribosomal peptide synthetase dtxS1 synthesizes destruxins B and B2, whereas the cytochrome P450 monooxygenase dtxS2 is required to convert destruxin B into other destruxin derivatives, including destructins C, D, A and E. Destruxin E-diol (ED) is further produced in a non-enzymatic manner from destruxin E. Destruxins play an important role in virulence and escape from insect host immune defenses. The polypeptide is Cytochrome P450 monooxygenase dtxS2 (Metarhizium robertsii (strain ARSEF 23 / ATCC MYA-3075) (Metarhizium anisopliae (strain ARSEF 23))).